The following is a 376-amino-acid chain: Probable deoxyhypusine synthase (376 aa).

NAD(+)-binding positions include 105–109 (SNLVS), 131–133 (TAG), E137, and D238. 136 to 137 (EE) provides a ligand contact to spermidine. Spermidine is bound at residue D243. G283 serves as a coordination point for NAD(+). Position 288 (H288) interacts with spermidine. Position 308–309 (308–309 (TG)) interacts with NAD(+). Spermidine is bound by residues 314-316 (GSD) and 323-329 (EAVSWGK). K329 functions as the Nucleophile in the catalytic mechanism. 342–343 (EA) lines the NAD(+) pocket.

This sequence belongs to the deoxyhypusine synthase family. NAD(+) serves as cofactor.

The enzyme catalyses [eIF5A protein]-L-lysine + spermidine = [eIF5A protein]-deoxyhypusine + propane-1,3-diamine. Its pathway is protein modification; eIF5A hypusination. In terms of biological role, catalyzes the NAD-dependent oxidative cleavage of spermidine and the subsequent transfer of the butylamine moiety of spermidine to the epsilon-amino group of a critical lysine residue of the eIF-5A precursor protein to form the intermediate deoxyhypusine residue. This is the first step of the post-translational modification of that lysine into an unusual amino acid residue named hypusine. Hypusination is unique to mature eIF-5A factor and is essential for its function. The polypeptide is Probable deoxyhypusine synthase (dhps) (Dictyostelium discoideum (Social amoeba)).